Consider the following 237-residue polypeptide: Large ribosomal subunit protein uL1 (237 aa).

This sequence belongs to the universal ribosomal protein uL1 family. Part of the 50S ribosomal subunit.

In terms of biological role, binds directly to 23S rRNA. The L1 stalk is quite mobile in the ribosome, and is involved in E site tRNA release. Protein L1 is also a translational repressor protein, it controls the translation of the L11 operon by binding to its mRNA. The sequence is that of Large ribosomal subunit protein uL1 from Myxococcus xanthus (strain DK1622).